The sequence spans 889 residues: DNA gyrase subunit A (889 aa).

Positions 35 to 501 (LPDVRDGLKP…GFEDLEDEDL (467 aa)) constitute a Topo IIA-type catalytic domain. Residue Tyr-123 is the O-(5'-phospho-DNA)-tyrosine intermediate of the active site. The short motif at 528–534 (QNRGGRG) is the GyrA-box element. Positions 811-889 (KEDAEDETNE…IQQSLDEDEE (79 aa)) are disordered. A compositionally biased stretch (acidic residues) spans 813–823 (DAEDETNEDEQ). The span at 863-875 (DGRIEVRQDFMDR) shows a compositional bias: basic and acidic residues. Residues 876 to 889 (VEEDIQQSLDEDEE) show a composition bias toward acidic residues.

This sequence belongs to the type II topoisomerase GyrA/ParC subunit family. As to quaternary structure, heterotetramer, composed of two GyrA and two GyrB chains. In the heterotetramer, GyrA contains the active site tyrosine that forms a transient covalent intermediate with DNA, while GyrB binds cofactors and catalyzes ATP hydrolysis.

It is found in the cytoplasm. It carries out the reaction ATP-dependent breakage, passage and rejoining of double-stranded DNA.. Its function is as follows. A type II topoisomerase that negatively supercoils closed circular double-stranded (ds) DNA in an ATP-dependent manner to modulate DNA topology and maintain chromosomes in an underwound state. Negative supercoiling favors strand separation, and DNA replication, transcription, recombination and repair, all of which involve strand separation. Also able to catalyze the interconversion of other topological isomers of dsDNA rings, including catenanes and knotted rings. Type II topoisomerases break and join 2 DNA strands simultaneously in an ATP-dependent manner. The sequence is that of DNA gyrase subunit A from Staphylococcus aureus.